A 136-amino-acid chain; its full sequence is LDYVYGPGRRAMNSPAVPALTKVLLEDVKKALTNTLSPGDRLLLVDMDEWGVDVALTGSQKALSFPTGMGLVCASPRVFFDWKDYLRTYWHYDQALDLELAVEAWGLSNRYNLSLGLGLNKVAGGKVFRDVGYPVK.

It belongs to the class-V pyridoxal-phosphate-dependent aminotransferase family. In terms of assembly, homodimer. Pyridoxal 5'-phosphate serves as cofactor. As to expression, expressed in leaves but not in root tissue or seedlings.

Its subcellular location is the peroxisome. It catalyses the reaction glyoxylate + L-serine = 3-hydroxypyruvate + glycine. The catalysed reaction is glyoxylate + L-alanine = glycine + pyruvate. With respect to regulation, inhibited by aminooxyacetate. The protein is Serine--glyoxylate aminotransferase of Zea mays (Maize).